Here is a 217-residue protein sequence, read N- to C-terminus: Protein TNT (217 aa).

Positions 1 to 217 (MSLVPGQHCS…HSTKQTGGKE (217 aa)) are disordered. Polar residues-rich tracts occupy residues 20–36 (SPIT…TEFS) and 45–61 (TSPQ…SQGP). Composition is skewed to low complexity over residues 91–104 (EPSL…LQSP) and 128–139 (QSSESHVSSVQH). 2 stretches are compositionally biased toward polar residues: residues 177–191 (RLNT…SQLG) and 207–217 (AHSTKQTGGKE).

As to expression, preferentially expressed in teratocarcinoma rather than in normal testis.

The protein is Protein TNT (C16orf82) of Homo sapiens (Human).